The chain runs to 197 residues: Casparian strip membrane protein 5 (197 aa).

The Cytoplasmic portion of the chain corresponds to 1–34 (MSTTIDMPGSSKAAKAGKPVLVTTPSRPGGWKKG). Residues 35-55 (VAIMDFILRLGAIAAALGAAA) form a helical membrane-spanning segment. Over 56 to 84 (TMGLSDQTLPFFTQFFQFEASYDSFTTFQ) the chain is Extracellular. A helical transmembrane segment spans residues 85 to 105 (FFVITMALVAGYLVLSLPLSI). The Cytoplasmic portion of the chain corresponds to 106–117 (VAVVRPHAAGPR). The chain crosses the membrane as a helical span at residues 118–138 (LFLIILDTVFLTLATASGASA). Over 139–171 (ASIVYLAHNGNQDTNWIAICNQFGDFCAQTSGA) the chain is Extracellular. A helical membrane pass occupies residues 172-192 (VVSSLVAVLVFVLLIVMSALV). Topologically, residues 193–197 (LGKKH) are cytoplasmic.

The protein belongs to the Casparian strip membrane proteins (CASP) family. Homodimer and heterodimers.

Its subcellular location is the cell membrane. Regulates membrane-cell wall junctions and localized cell wall deposition. Required for establishment of the Casparian strip membrane domain (CSD) and the subsequent formation of Casparian strips, a cell wall modification of the root endodermis that determines an apoplastic barrier between the intraorganismal apoplasm and the extraorganismal apoplasm and prevents lateral diffusion. The polypeptide is Casparian strip membrane protein 5 (Lotus japonicus (Lotus corniculatus var. japonicus)).